The chain runs to 460 residues: Argininosuccinate lyase (460 aa).

Belongs to the lyase 1 family. Argininosuccinate lyase subfamily.

Its subcellular location is the cytoplasm. The catalysed reaction is 2-(N(omega)-L-arginino)succinate = fumarate + L-arginine. It functions in the pathway amino-acid biosynthesis; L-arginine biosynthesis; L-arginine from L-ornithine and carbamoyl phosphate: step 3/3. In Alkaliphilus metalliredigens (strain QYMF), this protein is Argininosuccinate lyase.